A 104-amino-acid chain; its full sequence is Pyrimidine/purine nucleoside phosphorylase (104 aa).

Belongs to the nucleoside phosphorylase PpnP family.

The enzyme catalyses a purine D-ribonucleoside + phosphate = a purine nucleobase + alpha-D-ribose 1-phosphate. The catalysed reaction is adenosine + phosphate = alpha-D-ribose 1-phosphate + adenine. It catalyses the reaction cytidine + phosphate = cytosine + alpha-D-ribose 1-phosphate. It carries out the reaction guanosine + phosphate = alpha-D-ribose 1-phosphate + guanine. The enzyme catalyses inosine + phosphate = alpha-D-ribose 1-phosphate + hypoxanthine. The catalysed reaction is thymidine + phosphate = 2-deoxy-alpha-D-ribose 1-phosphate + thymine. It catalyses the reaction uridine + phosphate = alpha-D-ribose 1-phosphate + uracil. It carries out the reaction xanthosine + phosphate = alpha-D-ribose 1-phosphate + xanthine. Functionally, catalyzes the phosphorolysis of diverse nucleosides, yielding D-ribose 1-phosphate and the respective free bases. Can use uridine, adenosine, guanosine, cytidine, thymidine, inosine and xanthosine as substrates. Also catalyzes the reverse reactions. In Hydrogenovibrio crunogenus (strain DSM 25203 / XCL-2) (Thiomicrospira crunogena), this protein is Pyrimidine/purine nucleoside phosphorylase.